The sequence spans 145 residues: Large ribosomal subunit protein uL16 (145 aa).

Residues 76–95 (PKTKTPAETRMGKGKGEPEH) show a composition bias toward basic and acidic residues. A disordered region spans residues 76 to 97 (PKTKTPAETRMGKGKGEPEHFV).

The protein belongs to the universal ribosomal protein uL16 family. Part of the 50S ribosomal subunit.

Its function is as follows. Binds 23S rRNA and is also seen to make contacts with the A and possibly P site tRNAs. This chain is Large ribosomal subunit protein uL16, found in Salinibacter ruber (strain DSM 13855 / M31).